Consider the following 297-residue polypeptide: Bifunctional protein FolD (297 aa).

Residues 164–166, Ser-193, and Ile-234 each bind NADP(+); that span reads GRS.

The protein belongs to the tetrahydrofolate dehydrogenase/cyclohydrolase family. Homodimer.

The enzyme catalyses (6R)-5,10-methylene-5,6,7,8-tetrahydrofolate + NADP(+) = (6R)-5,10-methenyltetrahydrofolate + NADPH. The catalysed reaction is (6R)-5,10-methenyltetrahydrofolate + H2O = (6R)-10-formyltetrahydrofolate + H(+). Its pathway is one-carbon metabolism; tetrahydrofolate interconversion. Its function is as follows. Catalyzes the oxidation of 5,10-methylenetetrahydrofolate to 5,10-methenyltetrahydrofolate and then the hydrolysis of 5,10-methenyltetrahydrofolate to 10-formyltetrahydrofolate. In Halobacterium salinarum (strain ATCC 700922 / JCM 11081 / NRC-1) (Halobacterium halobium), this protein is Bifunctional protein FolD.